A 377-amino-acid chain; its full sequence is uncharacterized protein (377 aa).

A signal peptide spans 1–23 (MLKFRNFFKLTLLTLASAFFLSG). The N-palmitoyl cysteine moiety is linked to residue C24. A lipid anchor (S-diacylglycerol cysteine) is attached at C24.

The protein resides in the cell membrane. This is an uncharacterized protein from Mycoplasma genitalium (strain ATCC 33530 / DSM 19775 / NCTC 10195 / G37) (Mycoplasmoides genitalium).